The sequence spans 54 residues: Anti-adapter protein SpxO (54 aa).

Interacts with SpxH.

Its function is as follows. Inhibitor of Spx proteolytic control. Acts by interacting with SpxH/YjbH, which disrupts interaction between SpxH and Spx, and inhibits SpxH-enhanced proteolysis of Spx by ClpXP. Required for the stabilization of Spx and activation of Spx-regulated genes in response to cell wall stress. The protein is Anti-adapter protein SpxO of Bacillus subtilis (strain 168).